The following is a 207-amino-acid chain: D-aminoacyl-tRNA deacylase 1 (207 aa).

The short motif at 139–140 is the Gly-cisPro motif, important for rejection of L-amino acids element; sequence GP. The disordered stretch occupies residues 142-207; that stretch reads TIQLESPPAP…EGDVSSEREP (66 aa). 2 stretches are compositionally biased toward basic and acidic residues: residues 156–167 and 178–189; these read LLSKQEKQQQRK and SSREKAAQRSKV.

The protein belongs to the DTD family. As to quaternary structure, homodimer.

The protein resides in the cytoplasm. The enzyme catalyses a D-aminoacyl-tRNA + H2O = a tRNA + a D-alpha-amino acid + H(+). The catalysed reaction is glycyl-tRNA(Ala) + H2O = tRNA(Ala) + glycine + H(+). D-aminoacyl-tRNA deacylase, with no observable activity on tRNAs charged with their cognate L-amino acid. Hydrolyzes correctly charged, achiral, glycyl-tRNA(Gly). Deacylates mischarged D.melanogaster and E.coli glycyl-tRNA(Ala), protecting cells against glycine mischarging by AlaRS. Acts via tRNA-based rather than protein-based catalysis; rejects L-amino acids rather than detecting D-amino acids in the active site. By recycling D-aminoacyl-tRNA to D-amino acids and free tRNA molecules, this enzyme counteracts the toxicity associated with the formation of D-aminoacyl-tRNA entities in vivo and helps enforce protein L-homochirality. The chain is D-aminoacyl-tRNA deacylase 1 from Danio rerio (Zebrafish).